The chain runs to 1087 residues: MDQGAMETLPEKPSEDEFSLALRNGLILCNVLNKVNPGSVLKVVENPITPAIQYADGAAQSAIQYFENMRNFLKAVEDMQLLTFGASDLEKGGSSNKVVDCILCLKGFYEWKQAGGVGVWRYGGTVRIVSFNRKGSSPPQYGIGSESTTDESVSLDESESSQYDQLLDFLHLSNEISAEESETAISLAFLFDHFALQLLHGYLKESDGINDMPLNEMVIDTLLNRVVKDFSAILVSQGAQLGSFLRKILKCDNGDLSRSEFLAAVFRYLQHRKDLVSKEFSKFCKCGGKLEFSRLNAREFSPGHVEAIGLQQKELEEVKSNFVETRSQVKQMQSEWQKELQRIVHHVKAMEVTSSSYHKVLEENRLLYNEVQDLKGTIRVYCRVRPFFQEQKDMQSTVDYIGENGNIIINNPFKQEKDARKIFSFNKVFGQTVSQEQIYIDTQPVIRSVLDGFNVCIFAYGQTGSGKTYTMSGPDLMTETTWGVNYRALRDLFQLSNARTHVVTYEIGVQMIEIYNEQVRDLLVSDGSSRRLDIRNNSQLNGLNVPDANLIPVSNTRDVLDLMRIGQKNRAVGATALNERSSRSHSVLTVHVQGKELASGSILRGCLHLVDLAGSERVEKSEAVGERLKEAQHINKSLSALGDVIYALAQKSSHVPYRNSKLTQVLQDSLGGQAKTLMFVHINPEVNAVGETISTLKFAQRVASIELGAARSNKETGEIRDLKDEISSLKSAMEKKEAELEQLRSGSIRNTTECQRARAVSPFHLPRTGNGAGTKAEASPQPNDGTRSYETRSCSTGKQRKSGFPSALRNREASPRMPNLAEERLNPSPSRRSLSTDRASTIKSRNKPDVTQNLPVSRTPFPARVPVVKSFSTVPLNPSAENNHRLHTDNSSEAFQNHQKLSARKLFPEIEEEHIRHALHIRQGGVKKTRAESSKAKAKQPSPARFQKLDVGISLRSDADSEAKVGNYQTQKGNNNHNVIHSRFQNFDVGISLFSDLCAGDKSDSTLKSDSSETDNEPPSKSKNAQRNSSKNSLNHKLRTIYAHEDTSLVDDKPSNGTAHIKEGNNNISMPEFRRSRSTHHARFMVP.

Residues 1–110 (MDQGAMETLP…CILCLKGFYE (110 aa)) form the Calponin-homology (CH) domain. Residues 136–155 (SSPPQYGIGSESTTDESVSL) form a disordered region. The Kinesin motor domain maps to 377-705 (TIRVYCRVRP…LKFAQRVASI (329 aa)). Residue 461-468 (GQTGSGKT) participates in ATP binding. The stretch at 710-749 (ARSNKETGEIRDLKDEISSLKSAMEKKEAELEQLRSGSIR) forms a coiled coil. 3 disordered regions span residues 740–858 (LEQL…PVSR), 923–949 (QGGV…FQKL), and 1004–1087 (DSTL…FMVP). Composition is skewed to polar residues over residues 744-754 (RSGSIRNTTEC), 780-797 (PQPN…CSTG), and 836-856 (TDRA…NLPV). Polar residues predominate over residues 1017–1033 (EPPSKSKNAQRNSSKNS). The span at 1042-1054 (YAHEDTSLVDDKP) shows a compositional bias: basic and acidic residues. A compositionally biased stretch (basic residues) spans 1076–1087 (SRSTHHARFMVP).

Belongs to the TRAFAC class myosin-kinesin ATPase superfamily. Kinesin family. KIN-14 subfamily. Interacts (via C-terminus) with VDAC3. In terms of tissue distribution, expressed in roots, leaves, stems and flowers (at protein level).

The protein resides in the cytoplasm. It localises to the cytoskeleton. It is found in the mitochondrion. Its function is as follows. Required for keeping the ATP levels stable and balancing the aerobic respiration pathways during seed germination at low temperature. This is Kinesin-like protein KIN-14F from Arabidopsis thaliana (Mouse-ear cress).